The sequence spans 148 residues: MATILVLHGPNLNLLGLREPGIYGATTLADINQTLSEMATKAGHHLQYLQSNAEYELIDRIHDARKEGVDFIIINPAAFTHTSVALRDALLGVDIPFIEVHLSNVHKREAFRHHSFFSDVAQGVICGFGATSYELALQAAFKILGTPV.

Catalysis depends on Tyr23, which acts as the Proton acceptor. Positions 75, 81, and 88 each coordinate substrate. The Proton donor role is filled by His101. Substrate-binding positions include Leu102–Ser103 and Arg112.

The protein belongs to the type-II 3-dehydroquinase family. In terms of assembly, homododecamer.

The enzyme catalyses 3-dehydroquinate = 3-dehydroshikimate + H2O. It functions in the pathway metabolic intermediate biosynthesis; chorismate biosynthesis; chorismate from D-erythrose 4-phosphate and phosphoenolpyruvate: step 3/7. Its function is as follows. Catalyzes a trans-dehydration via an enolate intermediate. The sequence is that of 3-dehydroquinate dehydratase from Cellvibrio japonicus (strain Ueda107) (Pseudomonas fluorescens subsp. cellulosa).